The following is a 239-amino-acid chain: Phosphoribosylaminoimidazole-succinocarboxamide synthase (239 aa).

This sequence belongs to the SAICAR synthetase family.

The catalysed reaction is 5-amino-1-(5-phospho-D-ribosyl)imidazole-4-carboxylate + L-aspartate + ATP = (2S)-2-[5-amino-1-(5-phospho-beta-D-ribosyl)imidazole-4-carboxamido]succinate + ADP + phosphate + 2 H(+). It participates in purine metabolism; IMP biosynthesis via de novo pathway; 5-amino-1-(5-phospho-D-ribosyl)imidazole-4-carboxamide from 5-amino-1-(5-phospho-D-ribosyl)imidazole-4-carboxylate: step 1/2. In Acinetobacter baylyi (strain ATCC 33305 / BD413 / ADP1), this protein is Phosphoribosylaminoimidazole-succinocarboxamide synthase.